A 420-amino-acid polypeptide reads, in one-letter code: Mannose-1-phosphate guanylyltransferase regulatory subunit alpha (420 aa).

Residues 2-251 form a substrate-binding domain region; that stretch reads LKAVILIGGP…DGIWSQIKSA (250 aa). GDP-alpha-D-mannose is bound by residues glutamate 85 and glutamine 247. The interval 273-420 is hexapeptide repeat domain; sequence LARHTAGGPR…SRSFTNQIIL (148 aa). A C-loop region spans residues 356–384; sequence TPNDPNPNDPRARMDSESLFKDGKLLPAI.

It belongs to the transferase hexapeptide repeat family. In terms of assembly, component of the GMPPA-GMPPB mannose-1-phosphate guanylyltransferase complex composed of 4 GMPPA subunits and 8 GMPPB subunits; the complex is organized into three layers, a central layer made up of 2 GMPPA dimers sandwiched between two layers each made up of 2 GMPPB dimers.

It is found in the cytoplasm. Regulatory subunit of the GMPPA-GMPPB mannose-1-phosphate guanylyltransferase complex; reduces the catalytic activity of GMPPB when part of the complex. Mediates allosteric feedback inhibition of GMPPB catalytic activity upon binding GDP-alpha-D-mannose. Together with GMPPB regulates GDP-alpha-D-mannose levels. This Rattus norvegicus (Rat) protein is Mannose-1-phosphate guanylyltransferase regulatory subunit alpha (Gmppa).